The chain runs to 524 residues: Cysteine--tRNA ligase (524 aa).

Zn(2+) is bound at residue C29. Residues 31–41 carry the 'HIGH' region motif; that stretch reads PTVQAAPHVGH. Residues C207, H232, and E236 each contribute to the Zn(2+) site. Positions 246–258 are enriched in low complexity; that stretch reads ARPASNAASADSP. Residues 246–273 form a disordered region; the sequence is ARPASNAASADSPGPGGGEPGGGEPSSG. Over residues 259 to 270 the composition is skewed to gly residues; sequence GPGGGEPGGGEP. A 'KMSKS' region motif is present at residues 291-295; that stretch reads KMSKS. Residue K294 coordinates ATP.

The protein belongs to the class-I aminoacyl-tRNA synthetase family. Monomer. It depends on Zn(2+) as a cofactor.

The protein resides in the cytoplasm. The enzyme catalyses tRNA(Cys) + L-cysteine + ATP = L-cysteinyl-tRNA(Cys) + AMP + diphosphate. In Frankia casuarinae (strain DSM 45818 / CECT 9043 / HFP020203 / CcI3), this protein is Cysteine--tRNA ligase.